The sequence spans 144 residues: Large ribosomal subunit protein uL13 (144 aa).

The protein belongs to the universal ribosomal protein uL13 family. In terms of assembly, part of the 50S ribosomal subunit.

This protein is one of the early assembly proteins of the 50S ribosomal subunit, although it is not seen to bind rRNA by itself. It is important during the early stages of 50S assembly. The chain is Large ribosomal subunit protein uL13 from Nitrosomonas eutropha (strain DSM 101675 / C91 / Nm57).